The primary structure comprises 720 residues: Phosphatase and actin regulator 4 (720 aa).

The interval 1-48 (MGQPRFSRPVHPAAAAEEVDHPPSDAGMGVDVLESGDTTPPTKRKSKF) is disordered. One copy of the RPEL 1 repeat lies at 74–99 (EVLERKISMRKPREELVKRGVLLEDP). Disordered stretches follow at residues 294 to 417 (SGTG…GLPR), 454 to 568 (NDGF…DTLA), and 610 to 648 (RPTA…LSQR). Over residues 346–368 (TYPPPSPSPPLPTHIPPEPPRMP) the composition is skewed to pro residues. Residues 393–405 (KDFRSLEVSKRTA) show a composition bias toward basic and acidic residues. Acidic residues-rich tracts occupy residues 481 to 494 (DDEE…EEEQ), 521 to 534 (EEQE…DSDS), and 542 to 551 (DDEEDEEEDE). 2 RPEL repeats span residues 601 to 626 (TTLI…QPKN) and 639 to 664 (RRLT…RFNE). Residues 626–636 (NEADRQAEKRE) show a composition bias toward basic and acidic residues. Positions 637 to 646 (IKRRLTRKLS) are enriched in basic residues.

This sequence belongs to the phosphatase and actin regulator family. Binds PPP1CA and actin.

The protein localises to the cytoplasm. Its subcellular location is the cell projection. It is found in the lamellipodium. Functionally, regulator of protein phosphatase 1 (PP1) required for neural tube and optic fissure closure, and enteric neural crest cell (ENCCs) migration during development. Acts as an activator of PP1. During neural tube closure, localizes to the ventral neural tube and activates PP1, leading to down-regulate cell proliferation within cranial neural tissue and the neural retina. Also acts as a regulator of migration of enteric neural crest cells (ENCCs) by activating PP1, leading to repression of the integrin signaling through the RHO/ROCK pathway. The polypeptide is Phosphatase and actin regulator 4 (PHACTR4) (Gallus gallus (Chicken)).